The following is a 243-amino-acid chain: Chromosome partition protein MukE (243 aa).

A disordered region spans residues 214 to 243; the sequence is DSLALEKQADLNEVDDNDELEDELDDEEHA. Acidic residues predominate over residues 225 to 243; sequence NEVDDNDELEDELDDEEHA.

It belongs to the MukE family. As to quaternary structure, interacts, and probably forms a ternary complex, with MukF and MukB. The complex formation is stimulated by calcium or magnesium.

The protein resides in the cytoplasm. Its subcellular location is the nucleoid. Functionally, involved in chromosome condensation, segregation and cell cycle progression. May participate in facilitating chromosome segregation by condensation DNA from both sides of a centrally located replisome during cell division. Probably acts via its interaction with MukB and MukF. The chain is Chromosome partition protein MukE from Pasteurella multocida (strain Pm70).